The sequence spans 198 residues: Peptidyl-tRNA hydrolase (198 aa).

Tyrosine 14 contacts tRNA. Histidine 19 functions as the Proton acceptor in the catalytic mechanism. The tRNA site is built by tyrosine 64, asparagine 66, and asparagine 113.

The protein belongs to the PTH family. In terms of assembly, monomer.

It localises to the cytoplasm. It catalyses the reaction an N-acyl-L-alpha-aminoacyl-tRNA + H2O = an N-acyl-L-amino acid + a tRNA + H(+). In terms of biological role, hydrolyzes ribosome-free peptidyl-tRNAs (with 1 or more amino acids incorporated), which drop off the ribosome during protein synthesis, or as a result of ribosome stalling. Functionally, catalyzes the release of premature peptidyl moieties from peptidyl-tRNA molecules trapped in stalled 50S ribosomal subunits, and thus maintains levels of free tRNAs and 50S ribosomes. This Acidobacterium capsulatum (strain ATCC 51196 / DSM 11244 / BCRC 80197 / JCM 7670 / NBRC 15755 / NCIMB 13165 / 161) protein is Peptidyl-tRNA hydrolase.